The primary structure comprises 190 residues: MDLISHQPNKNPNSSTQLTPPSSSRYENQKRRDWNTFCQYLRNHRPPLSLPSCSGAHVLEFLRYLDQFGKTKVHHQNCAFFGLPNPPAPCPCPLRQAWGSLDALIGRLRAAYEENGGPPEANPFGSRAVRLFLREVRDFQAKARGVSYEKKRKRVNRQKPQTQPPLQLQQQQQQPQQGQSMMANYSGATV.

Residues 1–26 (MDLISHQPNKNPNSSTQLTPPSSSRY) show a composition bias toward polar residues. Disordered regions lie at residues 1–28 (MDLI…RYEN) and 145–190 (GVSY…GATV). The 128-residue stretch at 25–152 (RYENQKRRDW…ARGVSYEKKR (128 aa)) folds into the ALOG domain. The short motif at 150–154 (KKRKR) is the Nuclear localization signal element. Residues 158–179 (QKPQTQPPLQLQQQQQQPQQGQ) are compositionally biased toward low complexity. The segment covering 180–190 (SMMANYSGATV) has biased composition (polar residues).

Belongs to the plant homeotic and developmental regulators ALOG protein family. As to expression, expressed in hypocotyls, shoot apices and lateral root primordia and, weakly, in vascular tissues.

The protein localises to the nucleus. In terms of biological role, probable transcription regulator that acts as a developmental regulator by promoting cell growth in response to continuous red (cR), far-red (cFR) and blue (cB) light in a phytochrome-dependent manner, at least during seedling development. In Arabidopsis thaliana (Mouse-ear cress), this protein is Protein LIGHT-DEPENDENT SHORT HYPOCOTYLS 1 (LSH1).